The primary structure comprises 158 residues: COP9 signalosome complex subunit 9 (158 aa).

Residues 5–119 form the PCI domain; that stretch reads LLRNLIEDKT…SVARRATVLE (115 aa).

Component of a COP9 signalosome-like (CSN) complex.

The protein localises to the cytoplasm. It localises to the nucleus. Its function is as follows. Component of the COP9 signalosome (CSN) complex that acts as a regulator of the ubiquitin (Ubl) conjugation pathway by mediating the deneddylation of the cullin subunit of SCF-type E3 ubiquitin-protein ligase complexes. The complex is involved in the regulation of the mating pheromone response. The protein is COP9 signalosome complex subunit 9 (CSN9) of Kluyveromyces lactis (strain ATCC 8585 / CBS 2359 / DSM 70799 / NBRC 1267 / NRRL Y-1140 / WM37) (Yeast).